Consider the following 319-residue polypeptide: Acetyl-coenzyme A carboxylase carboxyl transferase subunit alpha (319 aa).

Residues 35-296 enclose the CoA carboxyltransferase C-terminal domain; it reads DLDKEIEQLE…KATLLRQLAE (262 aa).

It belongs to the AccA family. In terms of assembly, acetyl-CoA carboxylase is a heterohexamer composed of biotin carboxyl carrier protein (AccB), biotin carboxylase (AccC) and two subunits each of ACCase subunit alpha (AccA) and ACCase subunit beta (AccD).

Its subcellular location is the cytoplasm. The catalysed reaction is N(6)-carboxybiotinyl-L-lysyl-[protein] + acetyl-CoA = N(6)-biotinyl-L-lysyl-[protein] + malonyl-CoA. It functions in the pathway lipid metabolism; malonyl-CoA biosynthesis; malonyl-CoA from acetyl-CoA: step 1/1. Component of the acetyl coenzyme A carboxylase (ACC) complex. First, biotin carboxylase catalyzes the carboxylation of biotin on its carrier protein (BCCP) and then the CO(2) group is transferred by the carboxyltransferase to acetyl-CoA to form malonyl-CoA. This is Acetyl-coenzyme A carboxylase carboxyl transferase subunit alpha from Vibrio vulnificus (strain CMCP6).